Consider the following 177-residue polypeptide: Copper-binding regulatory protein cuf2 (177 aa).

The segment at residues Met-1–Leu-40 is a DNA-binding region (copper-fist). Zn(2+) is bound by residues Cys-11, Cys-14, Cys-23, and His-25.

Its subcellular location is the nucleus. The polypeptide is Copper-binding regulatory protein cuf2 (cuf2) (Schizosaccharomyces pombe (strain 972 / ATCC 24843) (Fission yeast)).